The sequence spans 425 residues: MLDQRLVRENPELMARELARRGLTVDLNSLQALAQQQRDLEEQRSSLQAEGNRVGKEVGLKIKAGADPKGSDVAELRQQGNAIKQKVAVLEDEERQLAAELKTQLLTFPNLPSPACPDGRDENDNIEVRSWGDPRRQEGLDEHWAIADRLGLLDSERSVRIAQSRFVTLFGQGARLERALINFMLDLHTGKGYREVLPPVLVNSASLTGSGQLPKFAEESFRCADDDLWLTPTAEVPLTSLHRDEIIPLDQLPLRYVAYSPCFRREAGSYGRDTRGLIRLHQFNKVELYWFVHPDHADEAHAAITADAEAVLQALELPYRVLELCTGDLGFSAARTYDLEVWLAGAGAYREISSCSVCGDFQARRSSIRTKDGKTTRLVHTLNGSGLAIGRTMAALLENGQQADGSVLLPQALVPYFGSDRLQPE.

233-235 (TAE) contributes to the L-serine binding site. 264–266 (RRE) serves as a coordination point for ATP. Glu-287 provides a ligand contact to L-serine. 351 to 354 (EISS) serves as a coordination point for ATP. Ser-385 contacts L-serine.

It belongs to the class-II aminoacyl-tRNA synthetase family. Type-1 seryl-tRNA synthetase subfamily. As to quaternary structure, homodimer. The tRNA molecule binds across the dimer.

The protein resides in the cytoplasm. The enzyme catalyses tRNA(Ser) + L-serine + ATP = L-seryl-tRNA(Ser) + AMP + diphosphate + H(+). It carries out the reaction tRNA(Sec) + L-serine + ATP = L-seryl-tRNA(Sec) + AMP + diphosphate + H(+). It functions in the pathway aminoacyl-tRNA biosynthesis; selenocysteinyl-tRNA(Sec) biosynthesis; L-seryl-tRNA(Sec) from L-serine and tRNA(Sec): step 1/1. Functionally, catalyzes the attachment of serine to tRNA(Ser). Is also able to aminoacylate tRNA(Sec) with serine, to form the misacylated tRNA L-seryl-tRNA(Sec), which will be further converted into selenocysteinyl-tRNA(Sec). This chain is Serine--tRNA ligase, found in Synechococcus sp. (strain WH7803).